A 553-amino-acid polypeptide reads, in one-letter code: Sulfatase (553 aa).

The N-terminal stretch at 1 to 25 (MTSEMKKFSKIVLFGLLISPLLASS) is a signal peptide. Ca(2+)-binding residues include D43, D44, and C88. C88 acts as the Nucleophile in catalysis. C88 bears the 3-oxoalanine (Cys) mark. The active site involves H159. Residues D350 and N351 each coordinate Ca(2+).

It belongs to the sulfatase family. Ca(2+) serves as cofactor. In terms of processing, the conversion to 3-oxoalanine (also known as C-formylglycine, FGly), of a serine or cysteine residue in prokaryotes and of a cysteine residue in eukaryotes, is critical for catalytic activity. This post-translational modification is severely defective in multiple sulfatase deficiency (MSD).

Its subcellular location is the secreted. In terms of biological role, sulfatase that may be involved in ulvan degradation. Ulvan is the main polysaccharide component of the Ulvales (green seaweed) cell wall. It is composed of disaccharide building blocks comprising 3-sulfated rhamnose (Rha3S) linked to D-glucuronic acid (GlcA), L-iduronic acid (IduA), or D-xylose (Xyl). This Formosa agariphila (strain DSM 15362 / KCTC 12365 / LMG 23005 / KMM 3901 / M-2Alg 35-1) protein is Sulfatase.